We begin with the raw amino-acid sequence, 454 residues long: Pyrrolysine--tRNA ligase (454 aa).

Residues 102-138 are disordered; that stretch reads TRTKKAMPKSVARAPKPLENTEAAQAQPSGSKFSPAI. Residues 123–133 show a composition bias toward polar residues; the sequence is EAAQAQPSGSK.

The protein belongs to the class-II aminoacyl-tRNA synthetase family.

The protein localises to the cytoplasm. The enzyme catalyses tRNA(Pyl) + L-pyrrolysine + ATP = L-pyrrolysyl-tRNA(Pyl) + AMP + diphosphate. Its function is as follows. Catalyzes the attachment of pyrrolysine to tRNA(Pyl). Pyrrolysine is a lysine derivative encoded by the termination codon UAG. The sequence is that of Pyrrolysine--tRNA ligase from Methanosarcina mazei (strain ATCC BAA-159 / DSM 3647 / Goe1 / Go1 / JCM 11833 / OCM 88) (Methanosarcina frisia).